The primary structure comprises 21 residues: Peptide PGLa-B2 (21 aa).

L21 is subject to Leucine amide.

Expressed by the skin glands.

Its subcellular location is the secreted. Has antimicrobial activity against Gram-negative bacterium E.coli ATCC 25922 (MIC=25 uM), Gram-positive bacterium S.auerus ATCC 25923 (MIC=50 uM) and against fungus C.albicans ATCC 90028 (MIC=25 uM). Has some hemolytic activity against human erythrocytes at high concentration. The sequence is that of Peptide PGLa-B2 from Xenopus borealis (Kenyan clawed frog).